Consider the following 233-residue polypeptide: Antiholin-like protein LrgB (233 aa).

6 helical membrane-spanning segments follow: residues 5–25, 33–53, 63–83, 97–117, 152–172, and 212–232; these read LGIN…VIAT, GFFL…FLKL, IGGD…AIPL, IFGG…LVAI, LTSL…AKIV, and IAVV…APIL.

This sequence belongs to the CidB/LrgB family. LrgB subfamily.

The protein resides in the cell membrane. Inhibits the expression or activity of extracellular murein hydrolases by interacting, possibly with LrgA, with the holin-like proteins CidA and/or CidB. The LrgAB and CidAB proteins may affect the proton motive force of the membrane. May be involved in programmed cell death (PCD), possibly triggering PCD in response to antibiotics and environmental stresses. The chain is Antiholin-like protein LrgB from Staphylococcus epidermidis (strain ATCC 35984 / DSM 28319 / BCRC 17069 / CCUG 31568 / BM 3577 / RP62A).